Here is an 883-residue protein sequence, read N- to C-terminus: Glutamate receptor 2 (883 aa).

The N-terminal stretch at 1–24 (MQKIMHISVLLSPILWGLIFGVSS) is a signal peptide. Residues 25 to 543 (NSIQIGGLFP…GVFSFLDPLA (519 aa)) are Extracellular-facing. A disulfide bridge links cysteine 78 with cysteine 330. Residues asparagine 256, asparagine 370, asparagine 406, and asparagine 413 are each glycosylated (N-linked (GlcNAc...) asparagine). Residues proline 499, threonine 501, and arginine 506 each coordinate L-glutamate. The chain crosses the membrane as a helical span at residues 544-564 (YEIWMCIVFAYIGVSVVLFLV). At 565–591 (SRFSPYEWHTEEFEDGRETQSSESTNE) the chain is on the cytoplasmic side. Residues 592–607 (FGIFNSLWFSLGAFMR) constitute an intramembrane region (helical; Pore-forming). The stretch at 608-610 (QGC) is an intramembrane region. A lipid anchor (S-palmitoyl cysteine) is attached at cysteine 610. At 611 to 616 (DISPRS) the chain is on the cytoplasmic side. The chain crosses the membrane as a helical span at residues 617-637 (LSGRIVGGVWWFFTLIIISSY). The Extracellular portion of the chain corresponds to 638–812 (TANLAAFLTV…EKTSALSLSN (175 aa)). 2 residues coordinate L-glutamate: serine 675 and threonine 676. Serine 683 bears the Phosphoserine; by PKC mark. A Phosphoserine; by PKG modification is found at serine 717. Glutamate 726 provides a ligand contact to L-glutamate. Cysteine 739 and cysteine 794 are oxidised to a cystine. The helical transmembrane segment at 813–833 (VAGVFYILVGGLGLAMLVALI) threads the bilayer. Topologically, residues 834–883 (EFCYKSRAEAKRMKVAKNAQNINPSSSQNSQNFATYKEGYNVYGIESVKI) are cytoplasmic. The S-palmitoyl cysteine moiety is linked to residue cysteine 836. Serine 860 and serine 863 each carry phosphoserine. The tract at residues 867 to 877 (ATYKEGYNVYG) is required for interaction with IQSEC1. The residue at position 876 (tyrosine 876) is a Phosphotyrosine. Serine 880 carries the phosphoserine modification.

Belongs to the glutamate-gated ion channel (TC 1.A.10.1) family. GRIA2 subfamily. In terms of assembly, homotetramer or heterotetramer of pore-forming glutamate receptor subunits. Tetramers may be formed by the dimerization of dimers. May interact with MPP4. Forms a ternary complex with GRIP1 and CSPG4. Interacts with ATAD1 in an ATP-dependent manner. ATAD1-catalyzed ATP hydrolysis disrupts binding to ATAD1 and to GRIP1 and leads to AMPAR complex disassembly. Interacts with GRIP1 and GRIP2. Interacts with NSF via its C-terminus. Isoform 1, but not isoform 3, interacts with PICK1. Interacts with CACNG2. Interacts with GRIA1 and SYNDIG1. Part of a complex containing GRIA2, NSF and NAPA and/or NAPB. Interacts with SNX27 (via PDZ domain); the interaction is required for recycling to the plasma membrane when endocytosed and prevent degradation in lysosomes. Interacts with LRFN1. Found in a complex with GRIA1, GRIA3, GRIA4, CNIH2, CNIH3, CACNG2, CACNG3, CACNG4, CACNG5, CACNG7 and CACNG8. Interacts with CACNG5. Interacts with OLFM2. Interacts with AP4B1, AP4E1 and AP4M1; probably indirect it mediates the somatodendritic localization of GRIA2 in neurons. Forms a complex with GRIP1, NSG1 and STX12; controls the intracellular fate of AMPAR and the endosomal sorting of the GRIA2 subunit toward recycling and membrane targeting. Interacts with IQSEC1; the interaction is required for ARF6 activation. Interacts (heterotetramer form) with CNIH2 and CNIH3; this interaction promotes expression at the plasma membrane and extensively modulates their gating properties by slowing deactivation and desensitization kinetics. In terms of processing, phosphorylation at Tyr-876 is required for interaction with IQSEC1 and ARF6 activation, which in turn triggers AMPAR internalization for persistent synaptic depression. Palmitoylated. Depalmitoylated upon L-glutamate stimulation. ZDHHC3/GODZ specifically palmitoylates Cys-610, which leads to Golgi retention and decreased cell surface expression. In contrast, Cys-836 palmitoylation does not affect cell surface expression but regulates stimulation-dependent endocytosis. Post-translationally, N-glycosylated. In terms of processing, ubiquitinated by RNF167, leading to its degradation.

The protein localises to the cell membrane. The protein resides in the postsynaptic cell membrane. It is found in the postsynaptic density membrane. The enzyme catalyses Ca(2+)(in) = Ca(2+)(out). The catalysed reaction is Na(+)(in) = Na(+)(out). In terms of biological role, ionotropic glutamate receptor that functions as a ligand-gated cation channel, gated by L-glutamate and glutamatergic agonists such as alpha-amino-3-hydroxy-5-methyl-4-isoxazolepropionic acid (AMPA), quisqualic acid, and kainic acid. L-glutamate acts as an excitatory neurotransmitter at many synapses in the central nervous system and plays an important role in fast excitatory synaptic transmission. Binding of the excitatory neurotransmitter L-glutamate induces a conformation change, leading to the opening of the cation channel, and thereby converts the chemical signal to an electrical impulse upon entry of monovalent and divalent cations such as sodium and calcium. The receptor then desensitizes rapidly and enters in a transient inactive state, characterized by the presence of bound agonist. In the presence of CACNG4 or CACNG7 or CACNG8, shows resensitization which is characterized by a delayed accumulation of current flux upon continued application of L-glutamate. Through complex formation with NSG1, GRIP1 and STX12 controls the intracellular fate of AMPAR and the endosomal sorting of the GRIA2 subunit toward recycling and membrane targeting. This is Glutamate receptor 2 from Macaca fascicularis (Crab-eating macaque).